We begin with the raw amino-acid sequence, 206 residues long: Large ribosomal subunit protein uL4 (206 aa).

Residues 44–87 (NRQGTQSAKTRSEVSGGGRKPWRQKGTGHARQGSTRSPQWTGGG) are disordered.

The protein belongs to the universal ribosomal protein uL4 family. As to quaternary structure, part of the 50S ribosomal subunit.

Functionally, one of the primary rRNA binding proteins, this protein initially binds near the 5'-end of the 23S rRNA. It is important during the early stages of 50S assembly. It makes multiple contacts with different domains of the 23S rRNA in the assembled 50S subunit and ribosome. Forms part of the polypeptide exit tunnel. This is Large ribosomal subunit protein uL4 from Lachnospira eligens (strain ATCC 27750 / DSM 3376 / VPI C15-48 / C15-B4) (Eubacterium eligens).